We begin with the raw amino-acid sequence, 450 residues long: Glucose-6-phosphate isomerase (450 aa).

Phosphothreonine is present on Thr-39. Glu-291 serves as the catalytic Proton donor. Catalysis depends on residues His-312 and Lys-426.

The protein belongs to the GPI family.

The protein localises to the cytoplasm. The enzyme catalyses alpha-D-glucose 6-phosphate = beta-D-fructose 6-phosphate. Its pathway is carbohydrate biosynthesis; gluconeogenesis. The protein operates within carbohydrate degradation; glycolysis; D-glyceraldehyde 3-phosphate and glycerone phosphate from D-glucose: step 2/4. Catalyzes the reversible isomerization of glucose-6-phosphate to fructose-6-phosphate. The sequence is that of Glucose-6-phosphate isomerase from Bacillus thuringiensis (strain Al Hakam).